Consider the following 209-residue polypeptide: Potassium-transporting ATPase KdpC subunit (209 aa).

A helical membrane pass occupies residues Ala-18–Ile-38.

It belongs to the KdpC family. The system is composed of three essential subunits: KdpA, KdpB and KdpC.

The protein localises to the cell inner membrane. Its function is as follows. Part of the high-affinity ATP-driven potassium transport (or Kdp) system, which catalyzes the hydrolysis of ATP coupled with the electrogenic transport of potassium into the cytoplasm. This subunit acts as a catalytic chaperone that increases the ATP-binding affinity of the ATP-hydrolyzing subunit KdpB by the formation of a transient KdpB/KdpC/ATP ternary complex. The protein is Potassium-transporting ATPase KdpC subunit of Xanthomonas campestris pv. campestris (strain 8004).